An 825-amino-acid chain; its full sequence is AP-3 complex subunit delta (825 aa).

HEAT repeat units lie at residues 131–168 (GLAR…QYPE), 169–205 (AISA…RAPK), 207–243 (YLEF…YEPR), 244–281 (LVKK…LVGH), 285–323 (DKLA…THPS), 324–360 (LVSA…KENI), 363–400 (IVKT…KSTY), 469–513 (EKRT…LAHR), 515–547 (LLQA…LWVE), and 548–584 (KIVS…IVNT). The segment at 787–825 (STNQGSMGDIVLETKSPIRVEKKKSKKKKKKKEKTSGKE) is disordered. A compositionally biased stretch (basic residues) spans 807 to 819 (EKKKSKKKKKKKE).

It belongs to the adaptor complexes large subunit family. As to quaternary structure, adaptor protein complex 3 (AP-3) is a heterotetramer composed of 2 large adaptins (apl5 and apl6), a medium adaptin (apm3) and a small adaptin (aps3).

It is found in the golgi apparatus. It localises to the cytoplasmic vesicle. The protein localises to the clathrin-coated vesicle membrane. In terms of biological role, part of the AP-3 complex, an adaptor-related complex which is not clathrin-associated. The complex is associated with the Golgi region as well as more peripheral structures. It facilitates the budding of vesicles from the Golgi membrane and may be directly involved in trafficking to the vacuole. This chain is AP-3 complex subunit delta (apl5), found in Schizosaccharomyces pombe (strain 972 / ATCC 24843) (Fission yeast).